The primary structure comprises 493 residues: Ketol-acid reductoisomerase (NADP(+)) (493 aa).

The KARI N-terminal Rossmann domain occupies 14-208; it reads LDQLGRCRFM…GGHRAGVLES (195 aa). Residues 45–48, arginine 68, arginine 76, serine 78, and 108–110 contribute to the NADP(+) site; these read CGAQ and DKQ. Histidine 132 is a catalytic residue. Residue glycine 158 participates in NADP(+) binding. 2 consecutive KARI C-terminal knotted domains span residues 209–345 and 346–486; these read SFVA…APKG and ENIK…MTDM. The Mg(2+) site is built by aspartate 217, glutamate 221, glutamate 390, and glutamate 394. Serine 415 contributes to the substrate binding site.

The protein belongs to the ketol-acid reductoisomerase family. Mg(2+) serves as cofactor.

It carries out the reaction (2R)-2,3-dihydroxy-3-methylbutanoate + NADP(+) = (2S)-2-acetolactate + NADPH + H(+). The enzyme catalyses (2R,3R)-2,3-dihydroxy-3-methylpentanoate + NADP(+) = (S)-2-ethyl-2-hydroxy-3-oxobutanoate + NADPH + H(+). Its pathway is amino-acid biosynthesis; L-isoleucine biosynthesis; L-isoleucine from 2-oxobutanoate: step 2/4. The protein operates within amino-acid biosynthesis; L-valine biosynthesis; L-valine from pyruvate: step 2/4. Involved in the biosynthesis of branched-chain amino acids (BCAA). Catalyzes an alkyl-migration followed by a ketol-acid reduction of (S)-2-acetolactate (S2AL) to yield (R)-2,3-dihydroxy-isovalerate. In the isomerase reaction, S2AL is rearranged via a Mg-dependent methyl migration to produce 3-hydroxy-3-methyl-2-ketobutyrate (HMKB). In the reductase reaction, this 2-ketoacid undergoes a metal-dependent reduction by NADPH to yield (R)-2,3-dihydroxy-isovalerate. The chain is Ketol-acid reductoisomerase (NADP(+)) from Histophilus somni (strain 2336) (Haemophilus somnus).